The sequence spans 131 residues: UPF0102 protein CYA_0708 (131 aa).

It belongs to the UPF0102 family.

The polypeptide is UPF0102 protein CYA_0708 (Synechococcus sp. (strain JA-3-3Ab) (Cyanobacteria bacterium Yellowstone A-Prime)).